A 150-amino-acid polypeptide reads, in one-letter code: Large ribosomal subunit protein bL9 (150 aa).

The protein belongs to the bacterial ribosomal protein bL9 family.

Binds to the 23S rRNA. This is Large ribosomal subunit protein bL9 from Shewanella sp. (strain MR-4).